The sequence spans 291 residues: MTSTNLEGTFPLIAKGKVRDIYQVDDNTLLFVATDRISAYDVIMSNGIPNKGKILTKLSEFWFDFLPIENHLIKGDIFQKYPQLEPYRNQLEGRSLLVRKLKLIPLEVIVRGYITGSGWKEYQKSKTVHGIPIGDVVESQQITPIFTPSTKAEQGEHDENITKEQADKIVGKELCDRIEKIAIDLYTKARDYAATKGIIIADTKFEFGLDGDNIVLVDEVLTPDSSRFWNAAKYEVGKSQDSYDKQFLRDWLTSNGVAGKDGVAMPEDIVTETKSKYVEAYENLTGDKWQE.

Belongs to the SAICAR synthetase family.

It catalyses the reaction 5-amino-1-(5-phospho-D-ribosyl)imidazole-4-carboxylate + L-aspartate + ATP = (2S)-2-[5-amino-1-(5-phospho-beta-D-ribosyl)imidazole-4-carboxamido]succinate + ADP + phosphate + 2 H(+). It functions in the pathway purine metabolism; IMP biosynthesis via de novo pathway; 5-amino-1-(5-phospho-D-ribosyl)imidazole-4-carboxamide from 5-amino-1-(5-phospho-D-ribosyl)imidazole-4-carboxylate: step 1/2. The sequence is that of Phosphoribosylaminoimidazole-succinocarboxamide synthase (ADE1) from Candida maltosa (Yeast).